The sequence spans 504 residues: Cytochrome P450 2K4 (504 aa).

Heme is bound at residue Cys447.

The protein belongs to the cytochrome P450 family. The cofactor is heme.

It localises to the endoplasmic reticulum membrane. Its subcellular location is the microsome membrane. It carries out the reaction an organic molecule + reduced [NADPH--hemoprotein reductase] + O2 = an alcohol + oxidized [NADPH--hemoprotein reductase] + H2O + H(+). This is Cytochrome P450 2K4 (cyp2k4) from Oncorhynchus mykiss (Rainbow trout).